We begin with the raw amino-acid sequence, 440 residues long: Aspartokinase (440 aa).

The protein belongs to the aspartokinase family.

It carries out the reaction L-aspartate + ATP = 4-phospho-L-aspartate + ADP. Its pathway is amino-acid biosynthesis; L-lysine biosynthesis via DAP pathway; (S)-tetrahydrodipicolinate from L-aspartate: step 1/4. The protein operates within amino-acid biosynthesis; L-methionine biosynthesis via de novo pathway; L-homoserine from L-aspartate: step 1/3. It functions in the pathway amino-acid biosynthesis; L-threonine biosynthesis; L-threonine from L-aspartate: step 1/5. This chain is Aspartokinase (lysC), found in Chlamydia pneumoniae (Chlamydophila pneumoniae).